The sequence spans 269 residues: Pyrroline-5-carboxylate reductase (269 aa).

Belongs to the pyrroline-5-carboxylate reductase family.

It localises to the cytoplasm. The catalysed reaction is L-proline + NADP(+) = (S)-1-pyrroline-5-carboxylate + NADPH + 2 H(+). It carries out the reaction L-proline + NAD(+) = (S)-1-pyrroline-5-carboxylate + NADH + 2 H(+). It participates in amino-acid biosynthesis; L-proline biosynthesis; L-proline from L-glutamate 5-semialdehyde: step 1/1. With respect to regulation, inhibited by p-chloromercuribenzoate. Functionally, catalyzes the reduction of 1-pyrroline-5-carboxylate (PCA) to L-proline. Does not catalyze the reverse reaction. In Escherichia coli (strain K12), this protein is Pyrroline-5-carboxylate reductase.